A 372-amino-acid chain; its full sequence is Protein RecA (372 aa).

81–88 (GPESSGKT) serves as a coordination point for ATP.

Belongs to the RecA family.

It localises to the cytoplasm. In terms of biological role, can catalyze the hydrolysis of ATP in the presence of single-stranded DNA, the ATP-dependent uptake of single-stranded DNA by duplex DNA, and the ATP-dependent hybridization of homologous single-stranded DNAs. It interacts with LexA causing its activation and leading to its autocatalytic cleavage. The sequence is that of Protein RecA from Haemophilus ducreyi (strain 35000HP / ATCC 700724).